Reading from the N-terminus, the 507-residue chain is Maturase K (507 aa).

Belongs to the intron maturase 2 family. MatK subfamily.

It is found in the plastid. It localises to the chloroplast. Its function is as follows. Usually encoded in the trnK tRNA gene intron. Probably assists in splicing its own and other chloroplast group II introns. This Ranunculus repens (Creeping buttercup) protein is Maturase K.